Consider the following 451-residue polypeptide: L,D-transpeptidase 5 (451 aa).

Residues 263 to 384 form the L,D-TPase catalytic domain; sequence QVVKAEVSSH…AVYGDPVEVT (122 aa). Substrate contacts are provided by residues Y323 and 337–338; that span reads NG. The active-site Proton donor/acceptor is the H342. The Nucleophile role is filled by C360. N362 lines the substrate pocket. The segment at 417–451 is disordered; sequence AAKPAATQIPVTAPVTPSDAPTPSGTPTTTNGPGG. The span at 437 to 451 shows a compositional bias: low complexity; sequence PTPSGTPTTTNGPGG.

It functions in the pathway cell wall biogenesis; peptidoglycan biosynthesis. Its activity is regulated as follows. In contrast to other LDT paralogs, LdtMt5 is not inactivated by the beta-lactam carbapenems; beta-lactam carbapenems form covalent adducts with other LDT paralogs but the formation of covalent adducts was not detected for LdtMt5. Its function is as follows. Generates 3-&gt;3 cross-links in peptidoglycan, catalyzing the cleavage of the mDap(3)-D-Ala(4) bond of a tetrapeptide donor stem and the formation of a bond between the carbonyl of mDap(3) of the donor stem and the side chain of mDap(3) of the acceptor stem. Is specific for donor substrates containing a stem tetrapeptide since it cannot use pentapeptide stems. The sequence is that of L,D-transpeptidase 5 (lprQ) from Mycobacterium tuberculosis (strain ATCC 25618 / H37Rv).